The following is a 384-amino-acid chain: DNA dC-&gt;dU-editing enzyme APOBEC-3G (384 aa).

The interval 1–60 (MKPHFRNPVERMYQDTFSDNFYNRPILSHRNTVWLCYEVKTKGPSRPPLDAKIFRGQVYS) is essential for cytoplasmic localization. CMP/dCMP-type deaminase domains are found at residues 29-138 (HRNT…LRSL) and 214-328 (GRHE…LRTL). T32 carries the post-translational modification Phosphothreonine; by PKA. Residues H65, C97, and C100 each contribute to the Zn(2+) site. The segment at 209-336 (ELWVRGRHET…TLAKAGAKIS (128 aa)) is necessary for homooligomerization. The interval 213-215 (RGR) is interaction with DNA. T218 carries the post-translational modification Phosphothreonine; by PKA and CAMK2. H257 is a binding site for Zn(2+). Catalysis depends on E259, which acts as the Proton donor. Positions 288 and 291 each coordinate Zn(2+). The interaction with DNA stretch occupies residues 313-320 (RIYDDQGR).

This sequence belongs to the cytidine and deoxycytidylate deaminase family. As to quaternary structure, homodimer. Homooligomer. Can bind RNA to form ribonucleoprotein complexes of high-molecular-mass (HMM) or low-molecular-mass (LMM). HMM is inactive and heterogeneous in protein composition because of binding nonselectively to cellular RNAs, which in turn are associated with variety of cellular proteins. The LMM form which is enzymatically active has few or no RNAs associated. Its ability to form homooligomer is distinct from its ability to assemble into HMM. Interacts with APOBEC3B, APOBEC3F, MOV10, AGO2, EIF4E, EIF4ENIF1, DCP2 and DDX6 in an RNA-dependent manner. Interacts with AGO1, AGO3 and PKA/PRKACA. Zn(2+) serves as cofactor.

It is found in the cytoplasm. The protein resides in the nucleus. Its subcellular location is the P-body. The catalysed reaction is a 2'-deoxycytidine in single-stranded DNA + H2O + H(+) = a 2'-deoxyuridine in single-stranded DNA + NH4(+). Functionally, DNA deaminase (cytidine deaminase) which acts as an inhibitor of retrovirus replication and retrotransposon mobility via deaminase-dependent and -independent mechanisms. Exhibits antiviral activity against vif-deficient: HIV-1 and simian immunodeficiency viruses (SIVs) and also against simian foamy virus (SFV). After the penetration of retroviral nucleocapsids into target cells of infection and the initiation of reverse transcription, it can induce the conversion of cytosine to uracil in the minus-sense single-strand viral DNA, leading to G-to-A hypermutations in the subsequent plus-strand viral DNA. The resultant detrimental levels of mutations in the proviral genome, along with a deamination-independent mechanism that works prior to the proviral integration, together exert efficient antiretroviral effects in infected target cells. Selectively targets single-stranded DNA and does not deaminate double-stranded DNA or single- or double-stranded RNA. May inhibit the mobility of LTR retrotransposons. The polypeptide is DNA dC-&gt;dU-editing enzyme APOBEC-3G (APOBEC3G) (Pan troglodytes (Chimpanzee)).